A 316-amino-acid polypeptide reads, in one-letter code: 4-hydroxy-3-methylbut-2-enyl diphosphate reductase (316 aa).

Residue cysteine 12 participates in [4Fe-4S] cluster binding. (2E)-4-hydroxy-3-methylbut-2-enyl diphosphate-binding residues include histidine 41 and histidine 74. Residues histidine 41 and histidine 74 each coordinate dimethylallyl diphosphate. Positions 41 and 74 each coordinate isopentenyl diphosphate. Cysteine 96 is a binding site for [4Fe-4S] cluster. Residue histidine 124 coordinates (2E)-4-hydroxy-3-methylbut-2-enyl diphosphate. A dimethylallyl diphosphate-binding site is contributed by histidine 124. Histidine 124 lines the isopentenyl diphosphate pocket. Residue glutamate 126 is the Proton donor of the active site. Threonine 169 is a binding site for (2E)-4-hydroxy-3-methylbut-2-enyl diphosphate. Cysteine 199 is a binding site for [4Fe-4S] cluster. 4 residues coordinate (2E)-4-hydroxy-3-methylbut-2-enyl diphosphate: serine 227, serine 228, asparagine 229, and serine 271. Positions 227, 228, 229, and 271 each coordinate dimethylallyl diphosphate. Residues serine 227, serine 228, asparagine 229, and serine 271 each coordinate isopentenyl diphosphate.

The protein belongs to the IspH family. [4Fe-4S] cluster is required as a cofactor.

The enzyme catalyses isopentenyl diphosphate + 2 oxidized [2Fe-2S]-[ferredoxin] + H2O = (2E)-4-hydroxy-3-methylbut-2-enyl diphosphate + 2 reduced [2Fe-2S]-[ferredoxin] + 2 H(+). It catalyses the reaction dimethylallyl diphosphate + 2 oxidized [2Fe-2S]-[ferredoxin] + H2O = (2E)-4-hydroxy-3-methylbut-2-enyl diphosphate + 2 reduced [2Fe-2S]-[ferredoxin] + 2 H(+). Its pathway is isoprenoid biosynthesis; dimethylallyl diphosphate biosynthesis; dimethylallyl diphosphate from (2E)-4-hydroxy-3-methylbutenyl diphosphate: step 1/1. The protein operates within isoprenoid biosynthesis; isopentenyl diphosphate biosynthesis via DXP pathway; isopentenyl diphosphate from 1-deoxy-D-xylulose 5-phosphate: step 6/6. In terms of biological role, catalyzes the conversion of 1-hydroxy-2-methyl-2-(E)-butenyl 4-diphosphate (HMBPP) into a mixture of isopentenyl diphosphate (IPP) and dimethylallyl diphosphate (DMAPP). Acts in the terminal step of the DOXP/MEP pathway for isoprenoid precursor biosynthesis. This chain is 4-hydroxy-3-methylbut-2-enyl diphosphate reductase, found in Xanthomonas axonopodis pv. citri (strain 306).